The sequence spans 1203 residues: MSEVKLTPEQNEAIHSSGKNILVSASAGSGKTFVMAQRIVEKVKQGIEIDRLFISTFTKKAASELRMRLERDLKKARQESSDDEEAHRLTLALQNLSNADIGTMDSFTQKLTKANFNRVNIDPNFRILADQTESDLIRQEVFEQLVESYLSADESLNISKDKFEKLIKNFSKDRNILGFQKVVYTIYRFASATENPISWLENQFLKGFETYKSLTDLSEDFTVNVKENLLTFFELLENSLTNGVIAKKGAGRDKANLILDNKNELLEAISKKDFVTCTALFLSIDTDIRVGSSKDEALSALKKDFSAQKQDLVGSKSKPGELRKFVDKIKHGQLIEKYQNQAFEIASDLQKFIIDFYKTYLERKKNENAFEYSDIAHFAIEILEENPDIRENLREHYDEIMIDEYQDTSHTQERMLELLSNGHNLFMVGDIKQSIYGFRLADPGLFLEKYKSYDQAENPNQLIRLKENFRSRGEVLNFTNDIFKHLMDEKLGEMTYGKEEALVQGNISDYPVEAEKDFYPELLLYKENTSEEEIEDSEVKISDGEIKGAAQEIKKLIEYGVEPKDIAILVRSKSNNNKIEDILLSYDIPVVLDEGRVDFLKSMEVLIMLDVLRAIDNPLYDLSLVAMLRSPLFGFNEDELTRISVQGSRDLRFWDKILLSLKKEGKNPELINLSLEQKLKAFNQKFTEWRKLVNKIPIHRLLWKIYTETYYFDYVGALKNGEMRQANLQALSVRAESYESSGYKGLFKFVRLINKFMEQNNDLASVNIKLPQNAVRVMTFHKSKGLEFDYVFLMNLQSRFNDRDLKEDVILSREHGLGMKYIADLKAEPDVITDFPYALVKMETFPYMVNKDLKQRAALSEEMRVLYVAFTRAKKKLYLVGKIKDTDKKAGLELYDAATLEGKILSDKFRNSSRGFQHWILALQNATKLPMKLNVYTKDELETEKLEFTSQPDFKKLVEESEKFDNIMSFSDEIKEAQKIMNYQYPHQAATELSSIQTPSQVKKRSYEKQLQVGEVQPVSEFVRVKNLDFSDFGPKKITAAEMGSATHSFMQYADFSQADLFSFQATLDEMGFDEKIKNQIDITKILTLFDTEFGQFLSENVDKTVKEAPFSMLRTDEFAKEQYIVRGICDGFVKLADKIILFDYKTDRFTNVSAISEIKERYKDQMNLYSEALQKAYHVNQIDKYLILLGGPRKVFVEKIDD.

Positions 4-472 (VKLTPEQNEA…IRLKENFRSR (469 aa)) constitute a UvrD-like helicase ATP-binding domain. 25 to 32 (ASAGSGKT) serves as a coordination point for ATP. The 283-residue stretch at 503 to 785 (VQGNISDYPV…RVMTFHKSKG (283 aa)) folds into the UvrD-like helicase C-terminal domain.

This sequence belongs to the helicase family. AddA subfamily. As to quaternary structure, heterodimer of RexA (AddA) and RexB. It depends on Mg(2+) as a cofactor.

The enzyme catalyses Couples ATP hydrolysis with the unwinding of duplex DNA by translocating in the 3'-5' direction.. It catalyses the reaction ATP + H2O = ADP + phosphate + H(+). In terms of biological role, the heterodimer acts both as an ATP-dependent DNA helicase and an ATP-dependent, dual-direction single-stranded exonuclease. Recognizes the L.lactis chi site (5'-GCGCGTG-3'), which stimulates homologous recombination. The RexA (AddA) nuclease domain is required for chi fragment generation; this subunit has 3'-&gt;5' exonuclease activity and probably also performs the helicase function. The chain is Exonuclease/helicase subunit RexA from Lactococcus lactis subsp. cremoris (strain MG1363).